Here is an 872-residue protein sequence, read N- to C-terminus: MIKKFDKKDEESGIGSNPFQHLEKSAVLQEARLFNETPINPRRCLHILTKILYLLNQGEHFGTMEATEAFFAMTRLFQSNDQTLRRMCYLTIKEMANISEDVIIVTSSLTKDMTGKEDVYRGPAIRALCRITDATMLQGIERYMKQAIVDKVSSVSSSALVSSLHMTKISYDVVKRWINEAQEAASSDNIMVQYHALGLLYNLRKNDRLAVSKMLNKFTKSGLKSPFAYCMLIRIASRLLEESEEGHNSPLFDFIESCLRNKHEMVIYEAASAIIHLPNCTARELAPAVSVLQLFCSSPKPALRYAAVRTLNKVAMKHPSAVTACNLDLENLITDSNRSIATLAITTLLKTGSESSVDRLMKQISTFVSEISDEFKVVVVQAISALCQKYPRKHSVMMTFLSNMLRDDGGFEYKRAIVDCIISIIEENPDSKESGLAHLCEFIEDCEHTVLATKILHLLGREGPKTPTPSKYIRFIFNRVVLENEAVRAAAVSALAKFGAQNEPLLPSVLVLLQRCMMDSDDEVRDRATFYFNVLNQNQLALNTAYIFNGLTVSVFGMEKALHQYTLEPSEKPFDMKTVPLATVPFLEQKTDLAPIATKQPEKMVPVRQDIFQDQLAAIPEFKNLGPLFKSSEPVQLTEAETEYFVRCIKHVFPNHIVFQFDCTNTLNDQLLEKVTVQMEPSEAYEVVHYVPAPSLPYNQPGISYTLVRLPDDDPTAVSCTFSCTMKFVVRDCDPQTGVPDDEGYSDEYVLEDLEVTLSDHIQKILKPNFGAAWEEIGDTYEKEETFALTTTKSLEEAVNNIIKFLGMQPCERSDKVPENKNSHVLYLSGVYRGGHDVLVRSRLALADGVTMQVTVRSQDETPANVILVSVG.

6 HEAT repeats span residues 64-101 (MEAT…ISED), 283-320 (RELA…KHPS), 321-355 (AVTA…GSES), 356-392 (SVDR…KYPR), 395-430 (SVMM…ENPD), and 467-504 (PTPS…QNEP).

It belongs to the COPG family. Oligomeric complex.

The protein resides in the cytoplasm. It is found in the golgi apparatus membrane. It localises to the cytoplasmic vesicle. Its subcellular location is the COPI-coated vesicle membrane. In terms of biological role, the coatomer is a cytosolic protein complex that binds to dilysine motifs and reversibly associates with Golgi non-clathrin-coated vesicles, which further mediate biosynthetic protein transport from the ER, via the Golgi up to the trans Golgi network. Coatomer complex is required for budding from Golgi membranes, and is essential for the retrograde Golgi-to-ER transport of dilysine-tagged proteins. In Xenopus tropicalis (Western clawed frog), this protein is Coatomer subunit gamma-2 (copg2).